A 244-amino-acid chain; its full sequence is Ribosome-inactivating protein cucurmosin (244 aa).

Catalysis depends on residues tyrosine 70, tyrosine 109, glutamate 158, and arginine 161. N-linked (GlcNAc...) asparagine glycans are attached at residues asparagine 189 and asparagine 225.

It belongs to the ribosome-inactivating protein family. Type 1 RIP subfamily. In terms of processing, the N-linked glycan consists of GlcNAc2Man3Xyl.

The catalysed reaction is Endohydrolysis of the N-glycosidic bond at one specific adenosine on the 28S rRNA.. Functionally, has cytotoxic activity towards cancer cells, but not normal cells. Inhibits the growth of the human leukemia cell line K562, the murine melanoma cell line B16 and the lung adenocarcinoma cell line A549 with IC(50) values of 88.1 nM, 63.4 nM and 359.3 nM respectively. This is Ribosome-inactivating protein cucurmosin from Cucurbita moschata (Winter crookneck squash).